The sequence spans 152 residues: Nucleoplasmin-like protein (152 aa).

The span at 109-128 (EVVDMEEDDEEDDVAEDEED) shows a compositional bias: acidic residues. Residues 109–152 (EVVDMEEDDEEDDVAEDEEDEHPKKRAKIENAADGKNAKNNKKK) form a disordered region. The span at 136-145 (KIENAADGKN) shows a compositional bias: basic and acidic residues.

Belongs to the nucleoplasmin family. In terms of assembly, decamer formed by two pentameric rings associated in a head-to-head fashion.

The protein localises to the nucleus. Its function is as follows. Binds to core histones and functions in the ATP-facilitated assembly of approximately regularly spaced nucleosomal arrays. May participate in parallel with other histone-binding proteins such as NAP-1. Functionally, inactive for chromatin assembly. In vitro it appears to form a high molecular mass aggregate with the core histones. The polypeptide is Nucleoplasmin-like protein (Nlp) (Drosophila melanogaster (Fruit fly)).